Here is a 602-residue protein sequence, read N- to C-terminus: Multiple epidermal growth factor-like domains protein 9 (602 aa).

A signal peptide spans Met1–Ala30. The Extracellular portion of the chain corresponds to Ala31–Asn514. Positions Ala38–Pro199 are disordered. An N-linked (GlcNAc...) asparagine glycan is attached at Asn40. Composition is skewed to low complexity over residues Pro68 to Ala85 and Ala139 to Ala166. Over residues Pro167 to Asp176 the composition is skewed to pro residues. Residue Asn182 is glycosylated (N-linked (GlcNAc...) asparagine). Residues Pro187–Pro199 are compositionally biased toward pro residues. 20 cysteine pairs are disulfide-bonded: Cys204/Cys217, Cys206/Cys224, Cys226/Cys235, Cys238/Cys251, Cys254/Cys266, Cys256/Cys272, Cys274/Cys283, Cys286/Cys298, Cys301/Cys310, Cys303/Cys317, Cys320/Cys329, Cys332/Cys346, Cys349/Cys360, Cys351/Cys371, Cys374/Cys383, Cys386/Cys397, Cys400/Cys415, Cys402/Cys422, Cys425/Cys434, and Cys437/Cys449. 5 consecutive Laminin EGF-like domains span residues Cys204 to Pro253, Cys254 to Pro300, Cys301 to Arg348, Cys349 to Lys399, and Cys400 to Lys451. Asn205 and Asn218 each carry an N-linked (GlcNAc...) asparagine glycan. The N-linked (GlcNAc...) asparagine glycan is linked to Asn245. Residue Asn267 is glycosylated (N-linked (GlcNAc...) asparagine). Asn305 carries an N-linked (GlcNAc...) asparagine glycan. N-linked (GlcNAc...) asparagine glycosylation occurs at Asn428. N-linked (GlcNAc...) asparagine glycosylation is found at Asn468, Asn481, and Asn500. A helical membrane pass occupies residues Ile515–Val535. Residues Tyr536–Ala602 are Cytoplasmic-facing.

It localises to the membrane. This chain is Multiple epidermal growth factor-like domains protein 9 (MEGF9), found in Homo sapiens (Human).